A 60-amino-acid polypeptide reads, in one-letter code: UPF0509 protein ESA_01586 (60 aa).

Belongs to the UPF0509 family.

The protein is UPF0509 protein ESA_01586 of Cronobacter sakazakii (strain ATCC BAA-894) (Enterobacter sakazakii).